The sequence spans 20 residues: Brevinin-1LT (20 aa).

A disulfide bridge connects residues Cys14 and Cys20.

As to expression, expressed by the skin glands.

It localises to the secreted. Its function is as follows. Antimicrobial peptide. This is Brevinin-1LT from Rana latastei (Italian agile frog).